Reading from the N-terminus, the 241-residue chain is Isoprenyl transferase (241 aa).

Residue aspartate 17 is part of the active site. Aspartate 17 contacts Mg(2+). Substrate is bound by residues 18 to 21 (GNGR), tryptophan 22, arginine 30, histidine 34, and 62 to 64 (STE). Asparagine 65 functions as the Proton acceptor in the catalytic mechanism. Residues tryptophan 66, arginine 68, arginine 186, and 192 to 194 (RLS) each bind substrate. Glutamate 205 provides a ligand contact to Mg(2+).

The protein belongs to the UPP synthase family. As to quaternary structure, homodimer. It depends on Mg(2+) as a cofactor.

Its function is as follows. Catalyzes the condensation of isopentenyl diphosphate (IPP) with allylic pyrophosphates generating different type of terpenoids. The polypeptide is Isoprenyl transferase (Leptospira interrogans serogroup Icterohaemorrhagiae serovar copenhageni (strain Fiocruz L1-130)).